Reading from the N-terminus, the 180-residue chain is Putative pre-16S rRNA nuclease (180 aa).

Residues 1–12 (MDAQERSERPDP) are compositionally biased toward basic and acidic residues. The disordered stretch occupies residues 1 to 23 (MDAQERSERPDPATDPGRGRRLG).

Belongs to the YqgF nuclease family.

It is found in the cytoplasm. In terms of biological role, could be a nuclease involved in processing of the 5'-end of pre-16S rRNA. The sequence is that of Putative pre-16S rRNA nuclease from Nocardia farcinica (strain IFM 10152).